The following is a 317-amino-acid chain: Ribosomal protein L11 methyltransferase (317 aa).

The S-adenosyl-L-methionine site is built by Thr-158, Gly-179, Asp-201, and Asn-244.

This sequence belongs to the methyltransferase superfamily. PrmA family.

It localises to the cytoplasm. It catalyses the reaction L-lysyl-[protein] + 3 S-adenosyl-L-methionine = N(6),N(6),N(6)-trimethyl-L-lysyl-[protein] + 3 S-adenosyl-L-homocysteine + 3 H(+). Functionally, methylates ribosomal protein L11. In Streptococcus pyogenes serotype M49 (strain NZ131), this protein is Ribosomal protein L11 methyltransferase.